The primary structure comprises 399 residues: Galactokinase (399 aa).

42 to 45 (EHTD) contributes to the substrate binding site. ATP is bound by residues Ser76 and 133–139 (ASGLSSS). Ser139 and Glu171 together coordinate Mg(2+). The active-site Proton acceptor is the Asp183. Tyr233 serves as a coordination point for substrate.

The protein belongs to the GHMP kinase family. GalK subfamily.

The protein localises to the cytoplasm. It carries out the reaction alpha-D-galactose + ATP = alpha-D-galactose 1-phosphate + ADP + H(+). It participates in carbohydrate metabolism; galactose metabolism. Its function is as follows. Catalyzes the transfer of the gamma-phosphate of ATP to D-galactose to form alpha-D-galactose-1-phosphate (Gal-1-P). The polypeptide is Galactokinase (Lactococcus lactis subsp. cremoris (strain MG1363)).